The sequence spans 564 residues: MTLKIRTIIILFCVISVTTTSQSLNATLKTFDPRLLNSTADRDIAMKNVPLVRLTRHLLSPERYDVRVRPILDHKKSLKVHISISLYQIIEVDEPSQNIKLNVWMIQKWRDEYLDWNPNEYGMINSTIIPFHHLWIPDTYLYNSVKMSRDETERYMNIQATSNYWKGEKGAELSFLYPAIYTITCRLNIRFFPYDRQNCTLTISSWTNSKSALDYYADTEVSMQSFIPNEEWQVKSFKIHRHEYKYACCAEPWVILQASLVIQRKPLYYLVNLIIPTSIITLVAITGFFTPASTDDDRTEKINLGITTLLAMSILMLMVSDQMPTTSEFVPLIAWFYLSIIIIISIGTFLTSVVLSVQGRRQYGRNPPQFIRYIFFVLLPQVLLLNVPPPLQTLWGELDDDPLNVRRRKKSHYLSRNVNNGSTKMASPMSTLRVPQSAGSVSEKRQSFQMIDVTSPNSPNTARSRAPSLAPSTAKATMWEGTMSALAGTNTQLRRTSNVFNKEVDEMRRKRQCSLEWEFLATVLDRFLLIVFVGAVVIVTAGLILVGRMAQYSYDHPDDRFFNV.

Positions 1-20 are cleaved as a signal peptide; it reads MTLKIRTIIILFCVISVTTT. Residues 21 to 268 lie on the Extracellular side of the membrane; the sequence is SQSLNATLKT…SLVIQRKPLY (248 aa). N-linked (GlcNAc...) asparagine glycosylation is found at N25, N37, N125, and N198. 2 disulfide bridges follow: C185/C199 and C248/C249. The next 3 membrane-spanning stretches (helical) occupy residues 269–289, 302–319, and 329–353; these read YLVNLIIPTSIITLVAITGFF, INLGITTLLAMSILMLMV, and FVPLIAWFYLSIIIIISIGTFLTSV. Over 354 to 526 the chain is Cytoplasmic; it reads VLSVQGRRQY…WEFLATVLDR (173 aa). The chain crosses the membrane as a helical span at residues 527-547; the sequence is FLLIVFVGAVVIVTAGLILVG.

Belongs to the ligand-gated ion channel (TC 1.A.9) family. Acetylcholine receptor (TC 1.A.9.1) subfamily. As to quaternary structure, the functional receptor is a heteromer of deg-3 and des-2. Interacts with ric-3; which is required for proper receptor folding.

It is found in the postsynaptic cell membrane. It localises to the cell membrane. Functionally, subunit of the non-synaptic neuronal acetylcholine receptor, which may play a role in chemotaxis towards choline. After binding choline or acetylcholine, the AChR responds by an extensive change in conformation that affects all subunits and leads to opening of an ion-conducting channel across the plasma membrane. The protein is Acetylcholine receptor subunit alpha-type deg-3 (deg-3) of Caenorhabditis elegans.